We begin with the raw amino-acid sequence, 348 residues long: Erlin-1 (348 aa).

Residues 1-7 (MNMTQAR) are Cytoplasmic-facing. The helical transmembrane segment at 8-28 (VLVAAVVGLVAVLLYASIHKI) threads the bilayer. Residues 29–348 (EEGHLAVYYR…NVIQNKESTG (320 aa)) are Lumenal-facing. A glycan (N-linked (GlcNAc...) asparagine) is linked at Asn-108. Lys-269 is subject to N6-acetyllysine. Positions 325 to 348 (SSLPSKEALEPSGENVIQNKESTG) are disordered. The segment covering 339–348 (NVIQNKESTG) has biased composition (polar residues).

The protein belongs to the band 7/mec-2 family. In terms of assembly, forms a heteromeric complex with ERLIN2. In complex with ERLIN2, interacts with RNF170. Interacts with AMFR and SYVN1. Post-translationally, deubiquitinated by USP25; leading to stabilization. In terms of tissue distribution, expressed in heart, placenta, liver, kidney, pancreas, prostate, testis, ovary and small intestine.

The protein resides in the endoplasmic reticulum membrane. Component of the ERLIN1/ERLIN2 complex which mediates the endoplasmic reticulum-associated degradation (ERAD) of inositol 1,4,5-trisphosphate receptors (IP3Rs). Involved in regulation of cellular cholesterol homeostasis by regulation the SREBP signaling pathway. Binds cholesterol and may promote ER retention of the SCAP-SREBF complex. In terms of biological role, (Microbial infection) Required early in hepatitis C virus (HCV) infection to initiate RNA replication, and later in the infection to support infectious virus production. This Homo sapiens (Human) protein is Erlin-1.